We begin with the raw amino-acid sequence, 111 residues long: Probable 4-amino-4-deoxy-L-arabinose-phosphoundecaprenol flippase subunit ArnE (111 aa).

3 helical membrane passes run 38–58, 61–81, and 91–111; these read LWLG…LLVL, LPVG…TLAA, and PRHW…GSAA. The 70-residue stretch at 40–109 folds into the EamA domain; the sequence is LGLALICMGA…IISGIIILGS (70 aa).

It belongs to the ArnE family. Heterodimer of ArnE and ArnF.

The protein resides in the cell inner membrane. It participates in bacterial outer membrane biogenesis; lipopolysaccharide biosynthesis. Its function is as follows. Translocates 4-amino-4-deoxy-L-arabinose-phosphoundecaprenol (alpha-L-Ara4N-phosphoundecaprenol) from the cytoplasmic to the periplasmic side of the inner membrane. In Salmonella paratyphi B (strain ATCC BAA-1250 / SPB7), this protein is Probable 4-amino-4-deoxy-L-arabinose-phosphoundecaprenol flippase subunit ArnE.